A 252-amino-acid chain; its full sequence is Adenosylcobinamide-GDP ribazoletransferase (252 aa).

A run of 7 helical transmembrane segments spans residues 35 to 55 (AMLPLIGLIVGCIQWVVFYIL), 58 to 78 (IFPANITAIFIILVGMVLIGG), 113 to 133 (FAVLALIFDILIKYSALSFII), 139 to 159 (YAIIITPIMSRCTLVFLFLIG), 170 to 190 (LFIENVSVKEFIISFIFMIVP), 192 to 212 (VLLIGYKYSVIIIVVSFIITL), and 231 to 251 (GANNEIVEMFTMLVFVALLYI).

The protein belongs to the CobS family. Mg(2+) is required as a cofactor.

Its subcellular location is the cell membrane. The catalysed reaction is alpha-ribazole + adenosylcob(III)inamide-GDP = adenosylcob(III)alamin + GMP + H(+). It carries out the reaction alpha-ribazole 5'-phosphate + adenosylcob(III)inamide-GDP = adenosylcob(III)alamin 5'-phosphate + GMP + H(+). The protein operates within cofactor biosynthesis; adenosylcobalamin biosynthesis; adenosylcobalamin from cob(II)yrinate a,c-diamide: step 7/7. In terms of biological role, joins adenosylcobinamide-GDP and alpha-ribazole to generate adenosylcobalamin (Ado-cobalamin). Also synthesizes adenosylcobalamin 5'-phosphate from adenosylcobinamide-GDP and alpha-ribazole 5'-phosphate. This chain is Adenosylcobinamide-GDP ribazoletransferase, found in Clostridium tetani (strain Massachusetts / E88).